Here is a 173-residue protein sequence, read N- to C-terminus: Translation initiation factor IF-3 (173 aa).

This sequence belongs to the IF-3 family. As to quaternary structure, monomer.

Its subcellular location is the cytoplasm. Its function is as follows. IF-3 binds to the 30S ribosomal subunit and shifts the equilibrium between 70S ribosomes and their 50S and 30S subunits in favor of the free subunits, thus enhancing the availability of 30S subunits on which protein synthesis initiation begins. The polypeptide is Translation initiation factor IF-3 (Neisseria gonorrhoeae (strain ATCC 700825 / FA 1090)).